The chain runs to 1040 residues: Beta-galactosidase (1040 aa).

Substrate is bound by residues Asn111 and Asp210. Position 210 (Asp210) interacts with Na(+). Residues Glu427, His429, and Glu472 each contribute to the Mg(2+) site. Residues Glu472 and 548 to 551 (EYAH) contribute to the substrate site. Catalysis depends on Glu472, which acts as the Proton donor. Glu548 acts as the Nucleophile in catalysis. A Mg(2+)-binding site is contributed by Asn608. Positions 612 and 615 each coordinate Na(+). 2 residues coordinate substrate: Asp615 and Trp1016.

It belongs to the glycosyl hydrolase 2 family. In terms of assembly, homotetramer. Mg(2+) serves as cofactor. The cofactor is Na(+).

It catalyses the reaction Hydrolysis of terminal non-reducing beta-D-galactose residues in beta-D-galactosides.. The sequence is that of Beta-galactosidase from Pectobacterium atrosepticum (strain SCRI 1043 / ATCC BAA-672) (Erwinia carotovora subsp. atroseptica).